A 52-amino-acid polypeptide reads, in one-letter code: Large ribosomal subunit protein bL32c (52 aa).

This sequence belongs to the bacterial ribosomal protein bL32 family.

It is found in the plastid. Its subcellular location is the chloroplast. This chain is Large ribosomal subunit protein bL32c, found in Capsella bursa-pastoris (Shepherd's purse).